Here is a 287-residue protein sequence, read N- to C-terminus: Large ribosomal subunit protein uL2 (287 aa).

Positions 222 to 266 (RGIRPTVRGSAMNPNDHPHGGGEGRSPVGRDAPRTPWGKRHMGVK) are disordered.

It belongs to the universal ribosomal protein uL2 family. As to quaternary structure, part of the 50S ribosomal subunit. Forms a bridge to the 30S subunit in the 70S ribosome.

One of the primary rRNA binding proteins. Required for association of the 30S and 50S subunits to form the 70S ribosome, for tRNA binding and peptide bond formation. It has been suggested to have peptidyltransferase activity; this is somewhat controversial. Makes several contacts with the 16S rRNA in the 70S ribosome. The sequence is that of Large ribosomal subunit protein uL2 from Mycoplasma pneumoniae (strain ATCC 29342 / M129 / Subtype 1) (Mycoplasmoides pneumoniae).